A 337-amino-acid chain; its full sequence is Probable phospholipase A1 magnifin (337 aa).

A signal peptide spans 1 to 21 (MNLKYLLLFFCLVQVLHYCYS). A propeptide spanning residues 22-33 (HGDPSLSNELDR) is cleaved from the precursor. C39 and C123 are disulfide-bonded. The active-site Nucleophile is the S173. D201 acts as the Charge relay system in catalysis. 2 disulfides stabilise this stretch: C212–C217 and C255–C264. H266 functions as the Charge relay system in the catalytic mechanism. Disulfide bonds link C281/C305, C282/C330, and C298/C303.

It belongs to the AB hydrolase superfamily. Lipase family. Expressed by the venom gland.

It localises to the secreted. It catalyses the reaction a 1,2-diacyl-sn-glycero-3-phosphocholine + H2O = a 2-acyl-sn-glycero-3-phosphocholine + a fatty acid + H(+). Its function is as follows. Catalyzes the hydrolysis of phosphatidylcholine with phospholipase A1 activity. May act as an allergen and induce hemolytic activity. In vivo, induces dose-dependent platelet aggregation (nanomolar concentration) and induces thrombosis. In Vespa magnifica (Hornet), this protein is Probable phospholipase A1 magnifin.